Here is a 321-residue protein sequence, read N- to C-terminus: D-alanine--D-alanine ligase (321 aa).

Residues 121 to 315 (RSCFLKNNIN…FTNLIEEIIK (195 aa)) enclose the ATP-grasp domain. 148–199 (MKRPYVIKPLKQGSSIGVEVIFEEDDFHFIDYDFPYGEDIIIEQYIQGQELQ) contributes to the ATP binding site. Mg(2+)-binding residues include Glu-268, Glu-282, and Asn-284.

It belongs to the D-alanine--D-alanine ligase family. Mg(2+) serves as cofactor. It depends on Mn(2+) as a cofactor.

It localises to the cytoplasm. It catalyses the reaction 2 D-alanine + ATP = D-alanyl-D-alanine + ADP + phosphate + H(+). It participates in cell wall biogenesis; peptidoglycan biosynthesis. In terms of biological role, cell wall formation. In Rickettsia typhi (strain ATCC VR-144 / Wilmington), this protein is D-alanine--D-alanine ligase.